The sequence spans 305 residues: Glycine--tRNA ligase alpha subunit (305 aa).

It belongs to the class-II aminoacyl-tRNA synthetase family. Tetramer of two alpha and two beta subunits.

It is found in the cytoplasm. It catalyses the reaction tRNA(Gly) + glycine + ATP = glycyl-tRNA(Gly) + AMP + diphosphate. The protein is Glycine--tRNA ligase alpha subunit of Streptococcus thermophilus (strain CNRZ 1066).